A 296-amino-acid polypeptide reads, in one-letter code: Mycothiol acetyltransferase (296 aa).

N-acetyltransferase domains lie at 17-146 and 156-296; these read YNHR…AVYD and LKTA…VYEK. Glu44 contacts 1D-myo-inositol 2-(L-cysteinylamino)-2-deoxy-alpha-D-glucopyranoside. 81 to 83 is an acetyl-CoA binding site; it reads LAV. 3 residues coordinate 1D-myo-inositol 2-(L-cysteinylamino)-2-deoxy-alpha-D-glucopyranoside: Glu183, Lys222, and Glu230. Residues 234-236 and 241-247 contribute to the acetyl-CoA site; these read VGL and RGKGLGD. Tyr268 lines the 1D-myo-inositol 2-(L-cysteinylamino)-2-deoxy-alpha-D-glucopyranoside pocket.

It belongs to the acetyltransferase family. MshD subfamily. As to quaternary structure, monomer.

It catalyses the reaction 1D-myo-inositol 2-(L-cysteinylamino)-2-deoxy-alpha-D-glucopyranoside + acetyl-CoA = mycothiol + CoA + H(+). Functionally, catalyzes the transfer of acetyl from acetyl-CoA to desacetylmycothiol (Cys-GlcN-Ins) to form mycothiol. In Corynebacterium efficiens (strain DSM 44549 / YS-314 / AJ 12310 / JCM 11189 / NBRC 100395), this protein is Mycothiol acetyltransferase.